A 365-amino-acid polypeptide reads, in one-letter code: 7-methylxanthine methyltransferase PCS1 (365 aa).

Y19 is an S-adenosyl-L-homocysteine binding site. Residue T26 coordinates caffeine. The S-adenosyl-L-homocysteine site is built by C62, N67, D99, L100, S134, and F135. Positions 152, 155, and 156 each coordinate caffeine. N173 contacts Mg(2+). H221 lines the caffeine pocket. Residues D259, F261, and N262 each coordinate Mg(2+). F317 contributes to the caffeine binding site.

The protein belongs to the methyltransferase superfamily. Type-7 methyltransferase family. The cofactor is Mg(2+).

It catalyses the reaction 1,7-dimethylxanthine + S-adenosyl-L-methionine = caffeine + S-adenosyl-L-homocysteine + H(+). It carries out the reaction 7-methylxanthine + S-adenosyl-L-methionine = theobromine + S-adenosyl-L-homocysteine + H(+). It participates in alkaloid biosynthesis. Involved in the biosynthesis of caffeine. Catalyzes the conversion of 7-methylxanthine (7mX) to theobromine, and, to some extent, the conversion of paraxanthine to caffeine, but seems not able to convert theobromine to caffeine. This Camellia ptilophylla (Cocoa tea) protein is 7-methylxanthine methyltransferase PCS1.